The primary structure comprises 334 residues: Flotillin-like protein FloA (334 aa).

Residues 3–23 (LYLIFLIVVGVVGLVLVGLFL) traverse the membrane as a helical segment.

It belongs to the flotillin-like FloA family. In terms of assembly, homooligomerizes.

It is found in the cell membrane. The protein localises to the membrane raft. In terms of biological role, found in functional membrane microdomains (FMM) that may be equivalent to eukaryotic membrane rafts. FMMs are highly dynamic and increase in number as cells age. Flotillins are thought to be important factors in membrane fluidity. The protein is Flotillin-like protein FloA of Opitutus terrae (strain DSM 11246 / JCM 15787 / PB90-1).